Consider the following 199-residue polypeptide: Small heat shock protein hspG4 (199 aa).

Positions 30 to 199 (NKRVDIIPSM…SSNTIKININ (170 aa)) constitute a sHSP domain. The interval 83 to 105 (KNQQQQQQQQQLENSNNKENDEP) is disordered.

This sequence belongs to the small heat shock protein (HSP20) family.

The polypeptide is Small heat shock protein hspG4 (hspG4) (Dictyostelium discoideum (Social amoeba)).